The chain runs to 341 residues: Methionine import ATP-binding protein MetN 2 (341 aa).

Residues 2–241 (IELKEVVKEY…PQHTVTKRFV (240 aa)) enclose the ABC transporter domain. Residue 38–45 (GFSGAGKS) participates in ATP binding.

This sequence belongs to the ABC transporter superfamily. Methionine importer (TC 3.A.1.24) family. In terms of assembly, the complex is composed of two ATP-binding proteins (MetN), two transmembrane proteins (MetI) and a solute-binding protein (MetQ).

It is found in the cell membrane. The enzyme catalyses L-methionine(out) + ATP + H2O = L-methionine(in) + ADP + phosphate + H(+). It catalyses the reaction D-methionine(out) + ATP + H2O = D-methionine(in) + ADP + phosphate + H(+). Part of the ABC transporter complex MetNIQ involved in methionine import. Responsible for energy coupling to the transport system. The protein is Methionine import ATP-binding protein MetN 2 of Staphylococcus aureus (strain bovine RF122 / ET3-1).